Reading from the N-terminus, the 3096-residue chain is Unconventional myosin-XVB (3096 aa).

Disordered stretches follow at residues 1 to 330 (MGRN…GPED), 389 to 489 (RPPE…GWGR), 508 to 540 (GGMPRASPGGRSPQVPTSPVPGDPFDQEDETPD), and 553 to 649 (AGRA…GPRL). Residues 19–33 (ASGEQESGSASADGA) show a composition bias toward low complexity. The segment covering 34–50 (PSRERRSDRGQADRAKP) has biased composition (basic and acidic residues). The segment covering 124–143 (RRRRKRKDKGPSARRGRRTP) has biased composition (basic residues). Basic and acidic residues-rich tracts occupy residues 212 to 222 (DWPHADTRGRE) and 261 to 288 (TFEDSSRAPRDTGPAKDASDNRAQRGAE). Residues 307–330 (AVGQVPAAAGEGEAGAAAGAGPED) are compositionally biased toward low complexity. The span at 406–416 (WGRRKPDEGRG) shows a compositional bias: basic and acidic residues. Positions 417–426 (HGRGSKGRGR) are enriched in basic residues. Residues 427–489 (GKADEGRGHE…HQRGYEGWGR (63 aa)) show a composition bias toward basic and acidic residues. In terms of domain architecture, Myosin motor spans 720-1394 (EDMEDLARLR…GWQRLEELRD (675 aa)). 818–825 (GHSGSGKT) serves as a coordination point for ATP. Positions 1273 to 1295 (LEDLIARLGRSHVYFIQCLTPNP) are actin-binding. The IQ domain maps to 1414-1443 (RQRVLPRMQARMRGFQARKRYLRRRAALGQ). Positions 1551-1702 (RPGQPLAKPL…PTQLEWLAGW (152 aa)) constitute a MyTH4 1 domain. Disordered stretches follow at residues 1802–1833 (PGIQAPSLPPGPPPGPAPTLPSRDHTGEVQRS), 1963–2026 (MQQR…PKSF), and 2040–2262 (QITV…LPED). The span at 1808–1820 (SLPPGPPPGPAPT) shows a compositional bias: pro residues. A compositionally biased stretch (low complexity) spans 1963-1980 (MQQRQQQARASEAASQAS). Acidic residues predominate over residues 2059–2076 (AQEEEEEEEEEEEQEEQE). The segment covering 2102 to 2116 (APKEAEAEPAKETAA) has biased composition (basic and acidic residues). Positions 2159-2170 (GPVPVPVQPSRP) are enriched in pro residues. The span at 2176–2185 (RKIDPKDEAL) shows a compositional bias: basic and acidic residues. 2 stretches are compositionally biased toward pro residues: residues 2199-2217 (MLSPSPGKGPPPAVAPRPK) and 2247-2261 (HTPPPPPAPPLPLPE). Residues 2481 to 2542 (KDSGYVIALR…PADIVQPAAA (62 aa)) enclose the SH3 domain. The interval 2548–2567 (SKEQRSGWHKGQLSNGEPGL) is disordered. Residues 2643 to 2789 (YTKAPIQESL…PPPGEMKAFL (147 aa)) form the MyTH4 2 domain. The region spanning 2795–3096 (RLLLIHLPGG…ASCTEWPSIN (302 aa)) is the FERM domain.

It belongs to the TRAFAC class myosin-kinesin ATPase superfamily. Myosin family. In terms of tissue distribution, detected in brain, stomach and kidney.

It is found in the cytoplasm. In Homo sapiens (Human), this protein is Unconventional myosin-XVB.